The primary structure comprises 507 residues: Histidine ammonia-lyase (507 aa).

Residues 143-145 (SSG) constitute a cross-link (5-imidazolinone (Ser-Gly)). Position 144 is a 2,3-didehydroalanine (Ser) (Ser-144).

This sequence belongs to the PAL/histidase family. In terms of processing, contains an active site 4-methylidene-imidazol-5-one (MIO), which is formed autocatalytically by cyclization and dehydration of residues Ser-Ser-Gly.

The protein localises to the cytoplasm. The catalysed reaction is L-histidine = trans-urocanate + NH4(+). Its pathway is amino-acid degradation; L-histidine degradation into L-glutamate; N-formimidoyl-L-glutamate from L-histidine: step 1/3. The polypeptide is Histidine ammonia-lyase (Alkaliphilus metalliredigens (strain QYMF)).